The following is a 668-amino-acid chain: Acyl-CoA-binding domain-containing protein 4 (668 aa).

The ACB domain occupies 12-106; sequence YPERFYAAAS…LEEDDPGWYS (95 aa). An acyl-CoA contacts are provided by residues lysine 33, 48-52, and lysine 74; that span reads YALYQ. Kelch repeat units lie at residues 195–242, 255–305, 307–356, 358–407, 408–456, and 463–508; these read KMYI…TLLA, KLLS…MVGK, LVIF…VHAE, FLLI…TIGE, NWFI…LVVS, and VLVA…VNNA. Serine 515 and serine 520 each carry phosphoserine. A coiled-coil region spans residues 538–647; sequence KVEGNSERII…EQAAMNAKRQ (110 aa). Residues 639–668 are disordered; the sequence is QAAMNAKRQGSGGVWGWLAGSPQEKDDDSP.

It belongs to the ACBP family. In terms of assembly, interacts with RAP2-3/EBP, an ethylene-responsive element binding protein. In terms of tissue distribution, mostly expressed in roots, stems, and leaves, and, to a lower extent, in flowers and siliques.

It is found in the cytoplasm. Its function is as follows. Binds medium- and long-chain acyl-CoA esters with very high affinity. Can interact in vitro with oleoyl-CoA, barely with palmitoyl-CoA, but not with arachidonyl-CoA. May function as an intracellular carrier of acyl-CoA esters. Plays a role in the biosynthesis of membrane lipids including galactolipids and phospholipids. The polypeptide is Acyl-CoA-binding domain-containing protein 4 (ACBP4) (Arabidopsis thaliana (Mouse-ear cress)).